Reading from the N-terminus, the 401-residue chain is Protein zntC (401 aa).

3 consecutive transmembrane segments (helical) span residues Gly-33 to Leu-53, Leu-61 to Phe-81, and Ile-114 to Leu-134. The interval Asn-141–Lys-247 is disordered. Acidic residues predominate over residues Gly-167 to Lys-184. Residues His-200–Gly-209 show a composition bias toward low complexity. A compositionally biased stretch (basic residues) spans His-212 to Gly-225. Residues His-226–Lys-247 are compositionally biased toward basic and acidic residues. 5 helical membrane-spanning segments follow: residues Ala-256–Ser-276, Gly-285–Ile-305, Cys-316–Ile-336, Gly-351–Pro-371, and Lys-381–Val-401.

The protein belongs to the ZIP transporter (TC 2.A.5) family.

It is found in the membrane. In terms of biological role, may transport divalent cations. May participate, with dstA, in the regulation of the differentiation of stalk cells during development. The sequence is that of Protein zntC (zntC) from Dictyostelium discoideum (Social amoeba).